The following is a 150-amino-acid chain: Calmodulin-like protein 7 (150 aa).

4 EF-hand domains span residues 1 to 36 (MDPTELKRVFQMFDKNGDGTITGKELSETLRSLGIY), 37 to 72 (IPDKELTQMIEKIDVNGDGCVDIDEFGELYKTIMDE), 75 to 110 (EEEEDMKEAFNVFDQNGDGFITVDELKAVLSSLGLK), and 113 to 148 (KTLDDCKKMIKKVDVDGDGRVNYKEFRQMMKGGGFN). Residues Asp-14, Asn-16, Asp-18, Thr-20, Glu-25, Asp-50, Asn-52, Asp-54, Cys-56, Glu-61, Asp-88, Asn-90, Asp-92, Glu-99, Asp-126, Asp-128, Asp-130, Arg-132, and Glu-137 each contribute to the Ca(2+) site.

The protein belongs to the calmodulin family.

In terms of biological role, potential calcium sensor. The polypeptide is Calmodulin-like protein 7 (CML7) (Arabidopsis thaliana (Mouse-ear cress)).